The following is a 158-amino-acid chain: MEMQKEYPMTQEGFDKLEVELEHLKTVRRPEVVEKIKVARSFGDLSENSEYDAAKDEQGFVEQEITKIEMMLRHAVIIEDDGSKSEVQIGRTVTFAEVPGNEEESYKIVGSAEADPFEGKISNESPIAKALLGKKVGDEVNVPLPNGNEMRVKIVEIS.

This sequence belongs to the GreA/GreB family.

Its function is as follows. Necessary for efficient RNA polymerase transcription elongation past template-encoded arresting sites. The arresting sites in DNA have the property of trapping a certain fraction of elongating RNA polymerases that pass through, resulting in locked ternary complexes. Cleavage of the nascent transcript by cleavage factors such as GreA or GreB allows the resumption of elongation from the new 3'terminus. GreA releases sequences of 2 to 3 nucleotides. The polypeptide is Transcription elongation factor GreA (Macrococcus caseolyticus (strain JCSC5402) (Macrococcoides caseolyticum)).